Consider the following 469-residue polypeptide: UDP-N-acetylmuramate--L-alanine ligase (469 aa).

114-120 lines the ATP pocket; it reads GTHGKTT.

Belongs to the MurCDEF family.

Its subcellular location is the cytoplasm. The enzyme catalyses UDP-N-acetyl-alpha-D-muramate + L-alanine + ATP = UDP-N-acetyl-alpha-D-muramoyl-L-alanine + ADP + phosphate + H(+). The protein operates within cell wall biogenesis; peptidoglycan biosynthesis. Functionally, cell wall formation. This chain is UDP-N-acetylmuramate--L-alanine ligase, found in Sinorhizobium fredii (strain NBRC 101917 / NGR234).